The chain runs to 249 residues: Phosphatidylserine decarboxylase proenzyme (249 aa).

Ser-208 functions as the Schiff-base intermediate with substrate; via pyruvic acid in the catalytic mechanism. At Ser-208 the chain carries Pyruvic acid (Ser); by autocatalysis.

Belongs to the phosphatidylserine decarboxylase family. PSD-A subfamily. As to quaternary structure, heterodimer of a large membrane-associated beta subunit and a small pyruvoyl-containing alpha subunit. It depends on pyruvate as a cofactor. Is synthesized initially as an inactive proenzyme. Formation of the active enzyme involves a self-maturation process in which the active site pyruvoyl group is generated from an internal serine residue via an autocatalytic post-translational modification. Two non-identical subunits are generated from the proenzyme in this reaction, and the pyruvate is formed at the N-terminus of the alpha chain, which is derived from the carboxyl end of the proenzyme. The post-translation cleavage follows an unusual pathway, termed non-hydrolytic serinolysis, in which the side chain hydroxyl group of the serine supplies its oxygen atom to form the C-terminus of the beta chain, while the remainder of the serine residue undergoes an oxidative deamination to produce ammonia and the pyruvoyl prosthetic group on the alpha chain.

The protein resides in the cell membrane. The enzyme catalyses a 1,2-diacyl-sn-glycero-3-phospho-L-serine + H(+) = a 1,2-diacyl-sn-glycero-3-phosphoethanolamine + CO2. It functions in the pathway phospholipid metabolism; phosphatidylethanolamine biosynthesis; phosphatidylethanolamine from CDP-diacylglycerol: step 2/2. Functionally, catalyzes the formation of phosphatidylethanolamine (PtdEtn) from phosphatidylserine (PtdSer). The protein is Phosphatidylserine decarboxylase proenzyme of Erythrobacter litoralis (strain HTCC2594).